The primary structure comprises 195 residues: Nicotinamide riboside kinase 1 (195 aa).

10–18 (GVTNGGKTT) contacts ATP. Positions 17 and 36 each coordinate Mg(2+). D36 functions as the Proton acceptor in the catalytic mechanism. Residues 36-39 (DDFF) and 55-56 (YD) each bind substrate. R128 lines the ATP pocket. Substrate-binding positions include R129 and 134-135 (YE). ATP-binding positions include 132-134 (RVY) and 172-174 (RSE).

The protein belongs to the uridine kinase family. NRK subfamily. In terms of assembly, monomer.

It carries out the reaction beta-nicotinamide D-riboside + ATP = beta-nicotinamide D-ribonucleotide + ADP + H(+). The enzyme catalyses beta-D-ribosylnicotinate + ATP = nicotinate beta-D-ribonucleotide + ADP + H(+). It participates in cofactor biosynthesis; NAD(+) biosynthesis. Functionally, catalyzes the phosphorylation of nicotinamide riboside (NR) and nicotinic acid riboside (NaR) to form nicotinamide mononucleotide (NMN) and nicotinic acid mononucleotide (NaMN). This chain is Nicotinamide riboside kinase 1 (Nmrk1), found in Rattus norvegicus (Rat).